A 397-amino-acid polypeptide reads, in one-letter code: Odorant receptor 2a (397 aa).

The Cytoplasmic portion of the chain corresponds to 1–38 (MEKQEDFKLNTHSAVYYHWRVWELTGLMRPPGVSSLLY). Residues 39 to 59 (VVYSITVNLVVTVLFPLSLLA) traverse the membrane as a helical segment. The Extracellular portion of the chain corresponds to 60–72 (RLLFTTNMAGLCE). Residues 73-92 (NLTITITDIVANLKFANVYM) traverse the membrane as a helical segment. Topologically, residues 93 to 131 (VRKQLHEIRSLLRLMDARARLVGDPEEISALRKEVNIAQ) are cytoplasmic. Residues 132–150 (GTFRTFASIFVFGTTLSCV) form a helical membrane-spanning segment. Residues 151-176 (RVVVRPDRELLYPAWFGVDWMHSTRN) lie on the Extracellular side of the membrane. A helical membrane pass occupies residues 177 to 197 (YVLINIYQLFGLIVQAIQNCA). The Cytoplasmic portion of the chain corresponds to 198 to 272 (SDSYPPAFLC…IIQRVLSVPC (75 aa)). The helical transmembrane segment at 273–293 (MAQFVCSAAVQCTVAMHFLYV) threads the bilayer. Residues 294–301 (ADDHDHTA) are Extracellular-facing. A helical transmembrane segment spans residues 302 to 322 (MIISIVFFSAVTLEVFVICYF). The Cytoplasmic segment spans residues 323–363 (GDRMRTQSEALCDAFYDCNWIEQLPKFKRELLFTLARTQRP). Residues 364 to 383 (SLIYAGNYIALSLETFEQVM) traverse the membrane as a helical segment. The Extracellular segment spans residues 384–397 (RFTYSVFTLLLRAK).

It belongs to the insect chemoreceptor superfamily. Heteromeric odorant receptor channel (TC 1.A.69) family. Or2a subfamily. Interacts with Orco. Complexes exist early in the endomembrane system in olfactory sensory neurons (OSNs), coupling these complexes to the conserved ciliary trafficking pathway. Expressed in 20 sensory neurons on the distal edge of the antenna.

The protein resides in the cell membrane. Functionally, odorant receptor which mediates acceptance or avoidance behavior, depending on its substrates. The odorant receptor repertoire encodes a large collection of odor stimuli that vary widely in identity, intensity, and duration. May form a complex with Orco to form odorant-sensing units, providing sensitive and prolonged odorant signaling and calcium permeability. The sequence is that of Odorant receptor 2a (Or2a) from Drosophila melanogaster (Fruit fly).